The chain runs to 31 residues: Cytochrome b6-f complex subunit 6 (31 aa).

Residues 4–24 (LLSYFGLLLAALISTLVLFIG) form a helical membrane-spanning segment.

The protein belongs to the PetL family. In terms of assembly, the 4 large subunits of the cytochrome b6-f complex are cytochrome b6, subunit IV (17 kDa polypeptide, PetD), cytochrome f and the Rieske protein, while the 4 small subunits are PetG, PetL, PetM and PetN. The complex functions as a dimer.

The protein localises to the plastid. It localises to the chloroplast thylakoid membrane. Functionally, component of the cytochrome b6-f complex, which mediates electron transfer between photosystem II (PSII) and photosystem I (PSI), cyclic electron flow around PSI, and state transitions. PetL is important for photoautotrophic growth as well as for electron transfer efficiency and stability of the cytochrome b6-f complex. The chain is Cytochrome b6-f complex subunit 6 from Psilotum nudum (Whisk fern).